The primary structure comprises 414 residues: Putative cytochrome P450 126 (414 aa).

Cys363 serves as a coordination point for heme.

It belongs to the cytochrome P450 family. The cofactor is heme.

The polypeptide is Putative cytochrome P450 126 (cyp126) (Mycobacterium tuberculosis (strain CDC 1551 / Oshkosh)).